The following is a 493-amino-acid chain: Glycogen synthase 1 (493 aa).

Lys-15 is a binding site for ADP-alpha-D-glucose.

Belongs to the glycosyltransferase 1 family. Bacterial/plant glycogen synthase subfamily.

It catalyses the reaction [(1-&gt;4)-alpha-D-glucosyl](n) + ADP-alpha-D-glucose = [(1-&gt;4)-alpha-D-glucosyl](n+1) + ADP + H(+). It functions in the pathway glycan biosynthesis; glycogen biosynthesis. Synthesizes alpha-1,4-glucan chains using ADP-glucose. The protein is Glycogen synthase 1 of Methylococcus capsulatus (strain ATCC 33009 / NCIMB 11132 / Bath).